We begin with the raw amino-acid sequence, 195 residues long: Imidazoleglycerol-phosphate dehydratase (195 aa).

The protein belongs to the imidazoleglycerol-phosphate dehydratase family.

Its subcellular location is the cytoplasm. The catalysed reaction is D-erythro-1-(imidazol-4-yl)glycerol 3-phosphate = 3-(imidazol-4-yl)-2-oxopropyl phosphate + H2O. Its pathway is amino-acid biosynthesis; L-histidine biosynthesis; L-histidine from 5-phospho-alpha-D-ribose 1-diphosphate: step 6/9. The sequence is that of Imidazoleglycerol-phosphate dehydratase from Maridesulfovibrio salexigens (strain ATCC 14822 / DSM 2638 / NCIMB 8403 / VKM B-1763) (Desulfovibrio salexigens).